A 1081-amino-acid polypeptide reads, in one-letter code: FHIP family protein GA25918 (1081 aa).

Residues 1-11 (MSWLRSSPLRQ) are compositionally biased toward polar residues. Disordered stretches follow at residues 1-31 (MSWL…GSLR), 504-524 (ARPK…EQPI), 650-685 (ADEE…MGGG), 830-913 (NENS…AASS), and 933-1027 (NNNN…SEPA). Position 508 is a phosphoserine (Ser508). Residues 657–668 (TDLTVTTTTASE) are compositionally biased toward low complexity. Ser833 bears the Phosphoserine mark. Over residues 840–856 (QPQTTLSQQQQQQQGQQ) the composition is skewed to low complexity. Positions 857-876 (RSAYATLSAATPVQATQTSA) are enriched in polar residues. 2 stretches are compositionally biased toward low complexity: residues 891–913 (SKSI…AASS) and 933–953 (NNNN…GTGT). A compositionally biased stretch (polar residues) spans 954 to 963 (CETSLSTNPQ). Residues 964 to 993 (SGAAAARSTGTATTANGNSSNSNISIGGST) are compositionally biased toward low complexity. Polar residues predominate over residues 994–1010 (QTLSGHSNTTTYSSSTL).

The protein belongs to the FHIP family.

This is FHIP family protein GA25918 from Drosophila pseudoobscura pseudoobscura (Fruit fly).